A 364-amino-acid polypeptide reads, in one-letter code: MATDEFSSSTTPSYDYYDYTNESGLPPCDETDWDLSYSLLPVFYMIVFVLGLSGNGVVIFTVWKAKPKRRSADTYIGNLALADLAFVVTLPLWATYTALGFHWPFGSALCKLSSYLVLLNMFASVFCLTCLSFDRYLAIVHSLSSAKLRSRSSILVSLAVIWLFSGLLALPSLILRDTRVEGNNTICDLDFSGVSSKENENFWIGGLSILTTVPGFLLPLLLMTIFYCFIGGKVTMHFQNLKKEEQKKKRLLKIIITLVVVFAICWLPFHILKTIHFLDLMGFLELSCSTQNIIVSLHPYATCLAYINSCLNPFLYAFFDLRFRSQCFFFFGFKKALQGHLSNTSSSLSAQTQKSEIHSLATKV.

Residues 1–39 (MATDEFSSSTTPSYDYYDYTNESGLPPCDETDWDLSYSL) lie on the Extracellular side of the membrane. N-linked (GlcNAc...) asparagine glycosylation is present at N21. Cystine bridges form between C28–C288 and C110–C187. A helical membrane pass occupies residues 40–60 (LPVFYMIVFVLGLSGNGVVIF). Topologically, residues 61–78 (TVWKAKPKRRSADTYIGN) are cytoplasmic. Residues 79–99 (LALADLAFVVTLPLWATYTAL) traverse the membrane as a helical segment. Residues 100–112 (GFHWPFGSALCKL) lie on the Extracellular side of the membrane. A helical membrane pass occupies residues 113-133 (SSYLVLLNMFASVFCLTCLSF). The Cytoplasmic portion of the chain corresponds to 134–153 (DRYLAIVHSLSSAKLRSRSS). The chain crosses the membrane as a helical span at residues 154-174 (ILVSLAVIWLFSGLLALPSLI). Over 175 to 201 (LRDTRVEGNNTICDLDFSGVSSKENEN) the chain is Extracellular. N183 carries an N-linked (GlcNAc...) asparagine glycan. Residues 202–222 (FWIGGLSILTTVPGFLLPLLL) traverse the membrane as a helical segment. Topologically, residues 223 to 250 (MTIFYCFIGGKVTMHFQNLKKEEQKKKR) are cytoplasmic. A helical membrane pass occupies residues 251-271 (LLKIIITLVVVFAICWLPFHI). Residues 272 to 298 (LKTIHFLDLMGFLELSCSTQNIIVSLH) are Extracellular-facing. Residues 299 to 319 (PYATCLAYINSCLNPFLYAFF) traverse the membrane as a helical segment. The Cytoplasmic segment spans residues 320–364 (DLRFRSQCFFFFGFKKALQGHLSNTSSSLSAQTQKSEIHSLATKV).

This sequence belongs to the G-protein coupled receptor 1 family.

The protein resides in the cell membrane. Functionally, g protein-coupled receptor for peptide hormones apelin (apln) and apelin receptor early endogenous ligand (apela), that plays a role in the regulation of normal cardiovascular function and fluid homeostasis. When acting as apelin receptor, activates both G(i) protein pathway that inhibits adenylate cyclase activity, and the beta-arrestin pathway that promotes internalization of the receptor. Also functions as mechanoreceptor that is activated by pathological stimuli in a G-protein-independent fashion to induce beta-arrestin signaling, hence eliciting cardiac hypertrophy. However, the presence of apelin ligand blunts cardiac hypertrophic induction from APLNR/APJ on response to pathological stimuli. Plays a key role in early development such as gastrulation, blood vessels formation and heart morphogenesis by acting as a receptor for apela hormone, promoting endoderm and mesendoderm cell migration and regulating the migration of cells fated to become myocardial progenitors, respectively. Promotes angioblast migration toward the embryonic midline, i.e. the position of the future vessel formation, during vasculogenesis. May promote sinus venosus (SV)-derived endothelial cells migration into the developing heart to promote coronary blood vessel development. Required for cardiovascular development, particularly for intersomitic vein angiogenesis. Plays also a role in various processes in adults such as regulation of blood vessel formation, blood pressure, heart contractility, and heart failure. Acts upstream of the i/o type of G-alpha proteins in the differentiation of endothelium, erythroid cells, myeloid cells and cardiomyocytes. The chain is Apelin receptor (aplnr) from Xenopus tropicalis (Western clawed frog).